A 579-amino-acid polypeptide reads, in one-letter code: Adipocyte plasma membrane-associated protein Hemomucin (579 aa).

Topologically, residues 1–6 are cytoplasmic; sequence MGLLYA. A helical transmembrane segment spans residues 7 to 29; the sequence is LRVRIMNFMIFFLLIILMPGLPP. Over 30–579 the chain is Extracellular; sequence RTTFPFKDYI…INKQGVNVEL (550 aa). Residues N213 and N217 are each glycosylated (N-linked (GlcNAc...) asparagine). Residues 427–579 form a disordered region; it reads GLEASIGVPP…INKQGVNVEL (153 aa). Positions 435 to 529 are enriched in low complexity; it reads PPSKATPKPK…PKPTTTTTPT (95 aa).

This sequence belongs to the strictosidine synthase family. As to quaternary structure, interacts with sturkopf. O-glycosylated. Glycosylated in the ovary of 4 day old females. In terms of processing, phosphorylated. In terms of tissue distribution, detected in ovaries (at protein level). In larvae, detected in the fat body, salivary glands, imaginal disks and gut (at protein level). In adults, expressed in the cardia, and in regions of the ventriculus including the area posterior to the cardia. In females also expressed in follicle cells.

It localises to the cell membrane. Its function is as follows. Transmembrane mucin that may be involved in cellular adhesion and the innate immune response. Membrane-tethered mucins are involved in many cell surface functions and form a physical barrier around cells to regulate cell-cell and/or cell-substrate interactions, and protect against pathogens or harmful extracellular conditions. This mucin likely acts in hemocyte adhesion as it is released from hemocytes during coagulation and is also able to bind lipophorin particles which form part of the hemocyte coagulogen. Able to induce expression of the antibacterial proteins in the presence of GalNAc-specific lectins and so probably also functions in the innate immune response. The sequence is that of Adipocyte plasma membrane-associated protein Hemomucin from Drosophila melanogaster (Fruit fly).